The following is a 350-amino-acid chain: FAD:protein FMN transferase (350 aa).

Positions 1–19 (MDMTFFRAALLGACVLLSG) are cleaved as a signal peptide. A lipid anchor (N-palmitoyl cysteine) is attached at C20. The S-diacylglycerol cysteine moiety is linked to residue C20. FAD contacts are provided by residues M41, W78, 119 to 121 (AMD), and D181. T184 is a Mg(2+) binding site. Residues E187 and I272 each contribute to the FAD site. Residues D298, D301, and T302 each coordinate Mg(2+).

It belongs to the ApbE family. The cofactor is Mg(2+).

It localises to the cell inner membrane. It carries out the reaction L-threonyl-[protein] + FAD = FMN-L-threonyl-[protein] + AMP + H(+). Functionally, flavin transferase that catalyzes the transfer of the FMN moiety of FAD and its covalent binding to the hydroxyl group of a threonine residue in a target flavoprotein such as NqrB and NqrC, two subunits of the NQR complex. This Klebsiella pneumoniae (strain 342) protein is FAD:protein FMN transferase.